A 550-amino-acid polypeptide reads, in one-letter code: Chaperonin GroEL (550 aa).

Residues 30–33 (TLGP), Lys-51, 87–91 (DGTTT), Gly-415, 479–481 (NAA), and Asp-495 contribute to the ATP site.

This sequence belongs to the chaperonin (HSP60) family. Forms a cylinder of 14 subunits composed of two heptameric rings stacked back-to-back. Interacts with the co-chaperonin GroES.

The protein resides in the cytoplasm. It catalyses the reaction ATP + H2O + a folded polypeptide = ADP + phosphate + an unfolded polypeptide.. In terms of biological role, together with its co-chaperonin GroES, plays an essential role in assisting protein folding. The GroEL-GroES system forms a nano-cage that allows encapsulation of the non-native substrate proteins and provides a physical environment optimized to promote and accelerate protein folding. The polypeptide is Chaperonin GroEL (Polynucleobacter asymbioticus (strain DSM 18221 / CIP 109841 / QLW-P1DMWA-1) (Polynucleobacter necessarius subsp. asymbioticus)).